A 515-amino-acid chain; its full sequence is Calcium-dependent protein kinase 2 (515 aa).

Residues 1-51 form a disordered region; the sequence is MGNCCPGSGDAEPASSDASTGNGSSSFKAGASPSSAPAQNKPPAPIGPVLG. Gly2 is lipidated: N-myristoyl glycine. Over residues 14-38 the composition is skewed to low complexity; that stretch reads ASSDASTGNGSSSFKAGASPSSAPA. In terms of domain architecture, Protein kinase spans 61-319; that stretch reads YTIGKELGRG…AYEVLNHPWI (259 aa). ATP contacts are provided by residues 67–75 and Lys90; that span reads LGRGQFGVT. Asp185 serves as the catalytic Proton acceptor. The tract at residues 325–355 is autoinhibitory domain; that stretch reads APDTPLDNAVMNRLKQFRAMNQFKKAALRVI. EF-hand domains follow at residues 362–397, 398–433, 434–469, and 473–504; these read EEIR…QGTK, LTEA…MNRM, DREE…KGLL, and DIKD…GNPE. 20 residues coordinate Ca(2+): Asp375, Asp377, Ser379, Thr381, Glu386, Asp411, Asp413, Asn415, Thr417, Glu422, Asp447, Asp449, Ser451, Cys453, Glu458, Asp482, Asp484, Asp486, Arg488, and Glu493.

The protein belongs to the protein kinase superfamily. Ser/Thr protein kinase family. CDPK subfamily. In terms of tissue distribution, expressed in heading panicles, spikelets and mature pollen grains.

The protein resides in the membrane. The enzyme catalyses L-seryl-[protein] + ATP = O-phospho-L-seryl-[protein] + ADP + H(+). The catalysed reaction is L-threonyl-[protein] + ATP = O-phospho-L-threonyl-[protein] + ADP + H(+). With respect to regulation, activated by calcium. Autophosphorylation may play an important role in the regulation of the kinase activity. Its function is as follows. May play a role in signal transduction pathways that involve calcium as a second messenger. This Oryza sativa subsp. japonica (Rice) protein is Calcium-dependent protein kinase 2.